We begin with the raw amino-acid sequence, 343 residues long: Oxygen-dependent coproporphyrinogen-III oxidase (343 aa).

Residue serine 99 participates in substrate binding. A divalent metal cation-binding residues include histidine 103 and histidine 113. Catalysis depends on histidine 113, which acts as the Proton donor. Position 115–117 (115–117) interacts with substrate; it reads NYR. Residues histidine 147 and histidine 177 each coordinate a divalent metal cation. Residues 267–302 are important for dimerization; that stretch reads YVEFNLVWDRGTIFGLQTNGRTESILMSLPPLARWE.

The protein belongs to the aerobic coproporphyrinogen-III oxidase family. Homodimer. Requires a divalent metal cation as cofactor.

The protein localises to the cytoplasm. The enzyme catalyses coproporphyrinogen III + O2 + 2 H(+) = protoporphyrinogen IX + 2 CO2 + 2 H2O. Its pathway is porphyrin-containing compound metabolism; protoporphyrin-IX biosynthesis; protoporphyrinogen-IX from coproporphyrinogen-III (O2 route): step 1/1. Functionally, involved in the heme and chlorophyll biosynthesis. Catalyzes the aerobic oxidative decarboxylation of propionate groups of rings A and B of coproporphyrinogen-III to yield the vinyl groups in protoporphyrinogen-IX. This chain is Oxygen-dependent coproporphyrinogen-III oxidase, found in Prochlorococcus marinus (strain SARG / CCMP1375 / SS120).